We begin with the raw amino-acid sequence, 369 residues long: uncharacterized protein (369 aa).

This sequence belongs to the myo-inositol 1-phosphate synthase family.

This is an uncharacterized protein from Mycobacterium leprae (strain TN).